Consider the following 379-residue polypeptide: Phospho-N-acetylmuramoyl-pentapeptide-transferase (379 aa).

10 helical membrane passes run 27–47 (FRTA…GPAV), 76–96 (TMGG…WADL), 100–120 (FVWI…TDDY), 135–155 (AKMG…VLVQ), 185–205 (PHIW…VLVG), 218–238 (GLAI…TYVS), 255–275 (VGEL…FLWY), 283–303 (FMGD…AVII), 307–327 (LLLP…ILQV), and 356–376 (KIIV…LTTL).

This sequence belongs to the glycosyltransferase 4 family. MraY subfamily. Mg(2+) serves as cofactor.

It localises to the cell inner membrane. The enzyme catalyses UDP-N-acetyl-alpha-D-muramoyl-L-alanyl-gamma-D-glutamyl-meso-2,6-diaminopimeloyl-D-alanyl-D-alanine + di-trans,octa-cis-undecaprenyl phosphate = di-trans,octa-cis-undecaprenyl diphospho-N-acetyl-alpha-D-muramoyl-L-alanyl-D-glutamyl-meso-2,6-diaminopimeloyl-D-alanyl-D-alanine + UMP. Its pathway is cell wall biogenesis; peptidoglycan biosynthesis. In terms of biological role, catalyzes the initial step of the lipid cycle reactions in the biosynthesis of the cell wall peptidoglycan: transfers peptidoglycan precursor phospho-MurNAc-pentapeptide from UDP-MurNAc-pentapeptide onto the lipid carrier undecaprenyl phosphate, yielding undecaprenyl-pyrophosphoryl-MurNAc-pentapeptide, known as lipid I. The protein is Phospho-N-acetylmuramoyl-pentapeptide-transferase of Koribacter versatilis (strain Ellin345).